Consider the following 400-residue polypeptide: Keratin, type I cytoskeletal 19 (400 aa).

The tract at residues 1–79 (MTSYSYRQSS…TASDGLLAGN (79 aa)) is head. Arginine 7 is modified (omega-N-methylarginine). Phosphoserine occurs at positions 14 and 22. At arginine 24 the chain carries Asymmetric dimethylarginine; alternate. Arginine 24 bears the Omega-N-methylarginine; alternate mark. Arginine 32 is subject to Omega-N-methylarginine. Serine 35 and serine 40 each carry phosphoserine. 2 positions are modified to omega-N-methylarginine: arginine 43 and arginine 51. Residues serine 57 and serine 72 each carry the phosphoserine modification. The tract at residues 80–115 (EKLTMQNLNDRLASYLDKVRALEAANGELEVKIRDW) is coil 1A. Residues 80-391 (EKLTMQNLND…SLLEGQEDHY (312 aa)) form the IF rod domain. Positions 116-133 (YQKQGPGPSRDYSHYYTT) are linker 1. Residues 134–225 (IQDLRDKILG…KNHEEEISTL (92 aa)) form a coil 1B region. A linker 12 region spans residues 226–248 (RGQVGGQVSVEVDSAPGTDLAKI). The necessary for interaction with PNN stretch occupies residues 244–390 (DLAKILSDMR…RSLLEGQEDH (147 aa)). Residues 249–387 (LSDMRSQYEV…ATYRSLLEGQ (139 aa)) are coil 2. Threonine 323 is subject to Phosphothreonine. Residues 388-400 (EDHYNNLSASKVL) form a rod-like helical tail region. Tyrosine 391 is modified (phosphotyrosine). 2 positions are modified to phosphoserine: serine 395 and serine 397.

Belongs to the intermediate filament family. As to quaternary structure, heterotetramer of two type I and two type II keratins. Interacts with PNN and the actin-binding domain of DMD. Interacts with HCV core protein. In terms of assembly, (Microbial infection) Interacts with hepatitis C virus/HCV core protein. In terms of tissue distribution, expressed in a defined zone of basal keratinocytes in the deep outer root sheath of hair follicles. Also observed in sweat gland and mammary gland ductal and secretory cells, bile ducts, gastrointestinal tract, bladder urothelium, oral epithelia, esophagus, ectocervical epithelium (at protein level). Expressed in epidermal basal cells, in nipple epidermis and a defined region of the hair follicle. Also seen in a subset of vascular wall cells in both the veins and artery of human umbilical cord, and in umbilical cord vascular smooth muscle. Observed in muscle fibers accumulating in the costameres of myoplasm at the sarcolemma in structures that contain dystrophin and spectrin.

Its function is as follows. Involved in the organization of myofibers. Together with KRT8, helps to link the contractile apparatus to dystrophin at the costameres of striated muscle. This Homo sapiens (Human) protein is Keratin, type I cytoskeletal 19 (KRT19).